Here is a 372-residue protein sequence, read N- to C-terminus: Rab9 effector protein with kelch motifs (372 aa).

Kelch repeat units lie at residues 49-95 (KVFI…FIPS), 100-146 (RIWV…TSSA), 151-200 (QLYV…VMVA), 204-250 (KLFI…SAVA), and 254-303 (HVYI…IIPW). A Phosphoserine modification is found at Ser-133. The disordered stretch occupies residues 314–340 (SNSLTLNHEAEKEDSADKVMSHSGDSH). Residues 321-340 (HEAEKEDSADKVMSHSGDSH) are compositionally biased toward basic and acidic residues.

Interacts with PIKFYVE; the interaction recruits RABEPK to the endosomal membrane. Interacts with RAB9 in its GTP-bound conformation. Phosphorylated on Ser residues by PIKFYVE.

The protein resides in the cytoplasm. It localises to the endosome membrane. In terms of biological role, rab9 effector required for endosome to trans-Golgi network (TGN) transport. The chain is Rab9 effector protein with kelch motifs from Homo sapiens (Human).